We begin with the raw amino-acid sequence, 365 residues long: Putative agmatine deiminase (365 aa).

Residue C357 is the Amidino-cysteine intermediate of the active site.

The protein belongs to the agmatine deiminase family.

It carries out the reaction agmatine + H2O = N-carbamoylputrescine + NH4(+). The polypeptide is Putative agmatine deiminase (Yersinia pseudotuberculosis serotype O:1b (strain IP 31758)).